Consider the following 548-residue polypeptide: Membrane protein insertase YidC (548 aa).

5 helical membrane passes run Asn-6–Asp-26, Asn-357–Thr-377, Leu-424–Leu-444, Phe-455–Met-475, and Pro-503–Val-523.

It belongs to the OXA1/ALB3/YidC family. Type 1 subfamily. Interacts with the Sec translocase complex via SecD. Specifically interacts with transmembrane segments of nascent integral membrane proteins during membrane integration.

Its subcellular location is the cell inner membrane. Its function is as follows. Required for the insertion and/or proper folding and/or complex formation of integral membrane proteins into the membrane. Involved in integration of membrane proteins that insert both dependently and independently of the Sec translocase complex, as well as at least some lipoproteins. Aids folding of multispanning membrane proteins. The sequence is that of Membrane protein insertase YidC from Aeromonas hydrophila subsp. hydrophila (strain ATCC 7966 / DSM 30187 / BCRC 13018 / CCUG 14551 / JCM 1027 / KCTC 2358 / NCIMB 9240 / NCTC 8049).